The chain runs to 267 residues: Hydroxyethylthiazole kinase (267 aa).

Substrate is bound at residue Met44. Residues Arg120 and Thr165 each contribute to the ATP site. Gly192 contacts substrate.

Belongs to the Thz kinase family. The cofactor is Mg(2+).

It carries out the reaction 5-(2-hydroxyethyl)-4-methylthiazole + ATP = 4-methyl-5-(2-phosphooxyethyl)-thiazole + ADP + H(+). It functions in the pathway cofactor biosynthesis; thiamine diphosphate biosynthesis; 4-methyl-5-(2-phosphoethyl)-thiazole from 5-(2-hydroxyethyl)-4-methylthiazole: step 1/1. Its function is as follows. Catalyzes the phosphorylation of the hydroxyl group of 4-methyl-5-beta-hydroxyethylthiazole (THZ). In Carboxydothermus hydrogenoformans (strain ATCC BAA-161 / DSM 6008 / Z-2901), this protein is Hydroxyethylthiazole kinase.